The chain runs to 505 residues: Chemotaxis regulatory protein ChePep (505 aa).

2 disordered regions span residues 154–403 (EPNN…EDIP) and 420–465 (EAVA…SSPL). 5 stretches are compositionally biased toward basic and acidic residues: residues 172–263 (EEVK…EKTQ), 289–311 (ENKE…EVVT), 337–346 (QAHELEKQEI), 359–373 (QDKE…KEET), and 386–398 (PQEK…HYES). A compositionally biased stretch (low complexity) spans 440–451 (TETSKNENNTET).

Interacts with CheZ; the interaction is essential for each other polar localization.

The protein resides in the cytoplasm. Functionally, plays an essential role in chemotaxis. Regulates flagellar rotation through the formation of a complex with chemotaxis protein CheZ. Plays a major role in colonization of the stomach. This Helicobacter pylori (strain ATCC 700392 / 26695) (Campylobacter pylori) protein is Chemotaxis regulatory protein ChePep.